The following is a 249-amino-acid chain: ATP synthase subunit a, chloroplastic (249 aa).

5 helical membrane-spanning segments follow: residues 40–60 (QVLI…VLAV), 97–117 (VPFI…GALL), 136–156 (INTT…AGLS), 201–221 (LVVV…VMFL), and 222–242 (GLFT…AYIG).

Belongs to the ATPase A chain family. As to quaternary structure, F-type ATPases have 2 components, CF(1) - the catalytic core - and CF(0) - the membrane proton channel. CF(1) has five subunits: alpha(3), beta(3), gamma(1), delta(1), epsilon(1). CF(0) has four main subunits: a, b, b' and c.

The protein resides in the plastid. It localises to the chloroplast thylakoid membrane. Functionally, key component of the proton channel; it plays a direct role in the translocation of protons across the membrane. This is ATP synthase subunit a, chloroplastic from Draba nemorosa (Woodland whitlowgrass).